Here is an 858-residue protein sequence, read N- to C-terminus: DNA replication licensing factor mcm4-A (858 aa).

Residues 1–125 (MSSPTSTPSR…ARKVKQVDLH (125 aa)) are disordered. 2 stretches are compositionally biased toward polar residues: residues 54-68 (SPSG…SSPA) and 79-94 (LDLS…SSRV). A C4-type zinc finger spans residues 301-326 (CQVCAFTTRVEIDRGRIAEPSVCKHC). In terms of domain architecture, MCM spans 453-662 (IYERLAAALA…YDRRLAHHLV (210 aa)). The ATP site is built by Tyr-466, Arg-492, Lys-511, Ser-512, Asn-613, Arg-638, Arg-727, and Glu-730. The Arginine finger signature appears at 637 to 640 (SRFD).

This sequence belongs to the MCM family. As to quaternary structure, component of the mcm2-7 complex (RLF-M). The complex forms a toroidal hexameric ring with the proposed subunit order mcm2-mcm6-mcm4-mcm7-mcm3-mcm5. The heterodimer of mmcm3/mcm5 interacts with mcm4, mmcm6, mcm7 and weakly with mcm2. Component of the CMG helicase complex, composed of the mcm2-7 complex, the GINS complex and cdc45. In terms of processing, hyperphosphorylated during mitosis in a mechanism requiring cdc2-cyclin B and other kinases. Undergoes dephosphorylation after exiting mitosis, existing in a partially phosphorylated state in the cytosolic interphase mcm complex which associates with the pre-replication complexes (pre-Rcs). Complete dephosphorylation inactivates the mcm complex, preventing its binding to chromatin. Becomes actively phosphorylated during S phase once the mcm complex is assembled on the chromatin. This chromatin-associated phosphorylation occurs during the activation of the pre-Rcs and is independent of cdks. Phosphorylated by the cdc7-dbf4b complex.

It localises to the nucleus. The protein resides in the chromosome. The enzyme catalyses ATP + H2O = ADP + phosphate + H(+). Functionally, acts as a component of the MCM2-7 complex (MCM complex) which is the replicative helicase essential for 'once per cell cycle' DNA replication initiation and elongation in eukaryotic cells. Core component of CDC45-MCM-GINS (CMG) helicase, the molecular machine that unwinds template DNA during replication, and around which the replisome is built. The active ATPase sites in the MCM2-7 ring are formed through the interaction surfaces of two neighboring subunits such that a critical structure of a conserved arginine finger motif is provided in trans relative to the ATP-binding site of the Walker A box of the adjacent subunit. The six ATPase active sites, however, are likely to contribute differentially to the complex helicase activity. The sequence is that of DNA replication licensing factor mcm4-A (mcm4-a) from Xenopus laevis (African clawed frog).